We begin with the raw amino-acid sequence, 208 residues long: MSLVGGFPHHPVMHHDGYSFAAAAAASRCHEEPPYFHGWLISHPEMSPPDYTMAPSYSPEYSTGAPGLDHSHYGGVPGAGAVGMGPRTVKRRPTANRKERRRTQSINSAFAELRECIPNVPADTKLSKIKTLRLATSYIAYLMDILDKDEQNGETEAFKAEFKKTDAKEERRKKEMNDVLKSSGSSNDKKTKGRTGWPQHVWALELKQ.

Disordered regions lie at residues 79–106 (AGAV…TQSI) and 161–197 (EFKK…RTGW). The segment covering 88–103 (TVKRRPTANRKERRRT) has biased composition (basic residues). In terms of domain architecture, bHLH spans 90-142 (KRRPTANRKERRRTQSINSAFAELRECIPNVPADTKLSKIKTLRLATSYIAYL). Basic and acidic residues predominate over residues 161–178 (EFKKTDAKEERRKKEMND).

Efficient DNA binding requires dimerization with another bHLH protein.

Its subcellular location is the nucleus. In terms of biological role, essential for myocardial and pectoral fin differentiation, patterning and morphogenesis. The protein is Heart- and neural crest derivatives-expressed protein 2 (hand2) of Danio rerio (Zebrafish).